The sequence spans 359 residues: Fe-S cluster assembly protein DRE2 (359 aa).

An N-terminal SAM-like domain region spans residues 1–159; that stretch reads MANILLLLHP…LFKKLSSNSN (159 aa). The tract at residues 152-187 is disordered; the sequence is KKLSSNSNNNNNSSSPIGLTDSSAANTDEETDEANV. Residues 155–166 show a composition bias toward low complexity; that stretch reads SSNSNNNNNSSS. Residues 159-228 are linker; it reads NNNNNSSSPI…DDLIKDSNQL (70 aa). A compositionally biased stretch (polar residues) spans 167 to 177; it reads PIGLTDSSAAN. [2Fe-2S] cluster is bound by residues Cys-240, Cys-252, Cys-255, and Cys-257. Positions 240-257 are fe-S binding site A; that stretch reads CEIPNGKKRRKACKDCTC. [4Fe-4S] cluster is bound by residues Cys-322, Cys-325, Cys-333, and Cys-336. 2 consecutive short sequence motifs (cx2C motif) follow at residues 322–325 and 333–336; these read CGSC and CDGC. The interval 322–336 is fe-S binding site B; it reads CGSCALGDAFRCDGC.

Belongs to the anamorsin family. In terms of assembly, monomer. Interacts with TAH18. Interacts with MIA40. Requires [2Fe-2S] cluster as cofactor. [4Fe-4S] cluster is required as a cofactor.

The protein localises to the cytoplasm. It localises to the mitochondrion intermembrane space. Its function is as follows. Component of the cytosolic iron-sulfur (Fe-S) protein assembly (CIA) machinery required for the maturation of extramitochondrial Fe-S proteins. Part of an electron transfer chain functioning in an early step of cytosolic Fe-S biogenesis, facilitating the de novo assembly of a [4Fe-4S] cluster on the scaffold complex CFD1-NBP35. Electrons are transferred to DRE2 from NADPH via the FAD- and FMN-containing protein TAH18. TAH18-DRE2 are also required for the assembly of the diferric tyrosyl radical cofactor of ribonucleotide reductase (RNR), probably by providing electrons for reduction during radical cofactor maturation in the catalytic small subunit RNR2. The polypeptide is Fe-S cluster assembly protein DRE2 (Scheffersomyces stipitis (strain ATCC 58785 / CBS 6054 / NBRC 10063 / NRRL Y-11545) (Yeast)).